Consider the following 665-residue polypeptide: Cinnamate reductase (665 aa).

Gln109 lines the FMN pocket. Tyr182 (proton donor) is an active-site residue. FMN-binding positions include Arg230, Arg319, and 341–342 (GR). Positions 365, 368, 372, and 384 each coordinate [4Fe-4S] cluster. 5 residues coordinate FAD: Ala415, Glu434, Asn442, Lys452, and Ala479.

The protein in the N-terminal section; belongs to the NADH:flavin oxidoreductase/NADH oxidase family. FMN serves as cofactor. It depends on FAD as a cofactor. The cofactor is [4Fe-4S] cluster.

It catalyses the reaction 3-phenylpropanoate + NAD(+) = (E)-cinnamate + NADH + H(+). The protein operates within amino-acid degradation; L-phenylalanine degradation. Functionally, involved in the fermentation of L-phenylalanine via a Stickland reaction. Catalyzes the reduction of (E)-cinnamate to yield 3-phenylpropionate. This chain is Cinnamate reductase, found in Clostridium sporogenes (strain ATCC 7955 / DSM 767 / NBRC 16411 / NCIMB 8053 / NCTC 8594 / PA 3679).